The following is a 580-amino-acid chain: NADH-ubiquinone oxidoreductase chain 5 (580 aa).

16 consecutive transmembrane segments (helical) span residues Phe12 to Met32, Ile50 to Ile70, Ile92 to Ile112, Ser113 to Gln133, Val153 to Tyr173, Met176 to Thr196, Ser218 to Leu240, Phe249 to Phe269, Ile274 to Tyr294, Phe300 to Ile320, Cys343 to Tyr363, Asn378 to Val400, Ile427 to Phe447, Met464 to Ile484, Met500 to Met520, and Ile560 to Asn580.

Belongs to the complex I subunit 5 family.

The protein localises to the mitochondrion inner membrane. It catalyses the reaction a ubiquinone + NADH + 5 H(+)(in) = a ubiquinol + NAD(+) + 4 H(+)(out). In terms of biological role, core subunit of the mitochondrial membrane respiratory chain NADH dehydrogenase (Complex I) that is believed to belong to the minimal assembly required for catalysis. Complex I functions in the transfer of electrons from NADH to the respiratory chain. The immediate electron acceptor for the enzyme is believed to be ubiquinone. This Aedes aegypti (Yellowfever mosquito) protein is NADH-ubiquinone oxidoreductase chain 5.